The primary structure comprises 201 residues: MNHAEGMNSHQYYDKHFQITAVKVFPGEFHATNQSRLLVTLLGSCVAVCLSDRISGVAGMNHFLLPEGSLDLGAGTSAARFGVNAMELLITDMQKLGAMRNRLEAKIFGAGNVLDGMTVVKVGERNTNFIRSYLANEQIPILAEDLLGECARKVYFFTATGKVLIKKLKKSGAAIKQEQPYRGRIVDQGEGAKTGDIDLFI.

Belongs to the CheD family.

It catalyses the reaction L-glutaminyl-[protein] + H2O = L-glutamyl-[protein] + NH4(+). Its function is as follows. Probably deamidates glutamine residues to glutamate on methyl-accepting chemotaxis receptors (MCPs), playing an important role in chemotaxis. This Chromobacterium violaceum (strain ATCC 12472 / DSM 30191 / JCM 1249 / CCUG 213 / NBRC 12614 / NCIMB 9131 / NCTC 9757 / MK) protein is Probable chemoreceptor glutamine deamidase CheD 2.